Consider the following 161-residue polypeptide: Transcriptional repressor NrdR (161 aa).

Residues 3–34 (CPFCGKYDTKVTDSRLVAEGDQVRRRRQCNDC) fold into a zinc finger. In terms of domain architecture, ATP-cone spans 49–139 (PRVIKGDGSR…VYRRFQDLDE (91 aa)).

This sequence belongs to the NrdR family. It depends on Zn(2+) as a cofactor.

In terms of biological role, negatively regulates transcription of bacterial ribonucleotide reductase nrd genes and operons by binding to NrdR-boxes. The polypeptide is Transcriptional repressor NrdR (Chromohalobacter salexigens (strain ATCC BAA-138 / DSM 3043 / CIP 106854 / NCIMB 13768 / 1H11)).